The following is a 277-amino-acid chain: Putative phosphoenolpyruvate synthase regulatory protein (277 aa).

157 to 164 (GVSRSGKT) serves as a coordination point for ADP.

Belongs to the pyruvate, phosphate/water dikinase regulatory protein family. PSRP subfamily.

It catalyses the reaction [pyruvate, water dikinase] + ADP = [pyruvate, water dikinase]-phosphate + AMP + H(+). The catalysed reaction is [pyruvate, water dikinase]-phosphate + phosphate + H(+) = [pyruvate, water dikinase] + diphosphate. In terms of biological role, bifunctional serine/threonine kinase and phosphorylase involved in the regulation of the phosphoenolpyruvate synthase (PEPS) by catalyzing its phosphorylation/dephosphorylation. In Azoarcus sp. (strain BH72), this protein is Putative phosphoenolpyruvate synthase regulatory protein.